The primary structure comprises 190 residues: uncharacterized protein (190 aa).

A helical transmembrane segment spans residues 12 to 34 (LLGLSIFLTTFLFVANFLPGIFA).

It is found in the membrane. This is an uncharacterized protein from Archaeoglobus fulgidus (strain ATCC 49558 / DSM 4304 / JCM 9628 / NBRC 100126 / VC-16).